Here is a 603-residue protein sequence, read N- to C-terminus: Aspartate--tRNA(Asp/Asn) ligase (603 aa).

An aspartate region spans residues 205–208 (QLFK). Residue arginine 227 participates in L-aspartate binding. ATP-binding positions include 227–229 (RDE) and glutamine 236. Histidine 463 provides a ligand contact to L-aspartate. Glutamate 497 contacts ATP. Residue arginine 504 coordinates L-aspartate. 549 to 552 (GMDR) is an ATP binding site.

It belongs to the class-II aminoacyl-tRNA synthetase family. Type 1 subfamily. In terms of assembly, homodimer.

Its subcellular location is the cytoplasm. The enzyme catalyses tRNA(Asx) + L-aspartate + ATP = L-aspartyl-tRNA(Asx) + AMP + diphosphate. Aspartyl-tRNA synthetase with relaxed tRNA specificity since it is able to aspartylate not only its cognate tRNA(Asp) but also tRNA(Asn). Reaction proceeds in two steps: L-aspartate is first activated by ATP to form Asp-AMP and then transferred to the acceptor end of tRNA(Asp/Asn). This Anaeromyxobacter sp. (strain K) protein is Aspartate--tRNA(Asp/Asn) ligase.